The following is a 515-amino-acid chain: Protein nucleotidyltransferase YdiU (515 aa).

ATP contacts are provided by glycine 101, glycine 103, arginine 104, lysine 124, aspartate 136, glycine 137, arginine 194, and arginine 201. The active-site Proton acceptor is aspartate 269. Residues asparagine 270 and aspartate 279 each contribute to the Mg(2+) site. Residue aspartate 279 participates in ATP binding.

This sequence belongs to the SELO family. Mg(2+) is required as a cofactor. The cofactor is Mn(2+).

It carries out the reaction L-seryl-[protein] + ATP = 3-O-(5'-adenylyl)-L-seryl-[protein] + diphosphate. It catalyses the reaction L-threonyl-[protein] + ATP = 3-O-(5'-adenylyl)-L-threonyl-[protein] + diphosphate. The catalysed reaction is L-tyrosyl-[protein] + ATP = O-(5'-adenylyl)-L-tyrosyl-[protein] + diphosphate. The enzyme catalyses L-histidyl-[protein] + UTP = N(tele)-(5'-uridylyl)-L-histidyl-[protein] + diphosphate. It carries out the reaction L-seryl-[protein] + UTP = O-(5'-uridylyl)-L-seryl-[protein] + diphosphate. It catalyses the reaction L-tyrosyl-[protein] + UTP = O-(5'-uridylyl)-L-tyrosyl-[protein] + diphosphate. Nucleotidyltransferase involved in the post-translational modification of proteins. It can catalyze the addition of adenosine monophosphate (AMP) or uridine monophosphate (UMP) to a protein, resulting in modifications known as AMPylation and UMPylation. This chain is Protein nucleotidyltransferase YdiU, found in Cytophaga hutchinsonii (strain ATCC 33406 / DSM 1761 / CIP 103989 / NBRC 15051 / NCIMB 9469 / D465).